The primary structure comprises 498 residues: Ammonium transporter 1 member 1 (498 aa).

11 helical membrane-spanning segments follow: residues 39 to 59, 74 to 94, 120 to 140, 148 to 168, 192 to 212, 236 to 256, 274 to 296, 307 to 327, 331 to 351, 360 to 380, and 411 to 431; these read LLFS…LCAG, VLDA…FAFG, FFLF…GSIA, YLIY…HWIW, FAGS…GALI, LVVL…PGSF, SGVG…TTLF, VVDV…GCSV, WAAI…NALA, LEAA…TALF, and VIQI…LFYG.

The protein belongs to the ammonia transporter channel (TC 1.A.11.2) family. Expressed in roots and shoots.

Its subcellular location is the membrane. Functionally, ammonium transporter probably involved in ammonium uptake from the soil. This Oryza sativa subsp. japonica (Rice) protein is Ammonium transporter 1 member 1 (AMT1-1).